We begin with the raw amino-acid sequence, 278 residues long: F-box only protein 17 (278 aa).

An F-box domain is found at 15–62 (SLALDALPPELLVQVLSHVPPRSLVTRCRPVCRAWRDIVDGPTVWLLQ). The region spanning 99–275 (YCLRAPFGRN…VTHSSVRVRI (177 aa)) is the FBA domain.

As to quaternary structure, part of a SCF (SKP1-cullin-F-box) protein ligase complex. Interacts with SKP1 and CUL1. Expressed in heart, skeletal muscle, liver and kidney. Expressed at lower levels in spleen and brain.

Substrate-recognition component of the SCF (SKP1-CUL1-F-box protein)-type E3 ubiquitin ligase complex. Able to recognize and bind denatured glycoproteins, which are modified with complex-type oligosaccharides. Also recognizes sulfated glycans. Does not bind high-mannose glycoproteins. The polypeptide is F-box only protein 17 (FBXO17) (Homo sapiens (Human)).